A 227-amino-acid polypeptide reads, in one-letter code: MAYPFQLGLQDATSPIMEELTNFHDHTLMIVFLISTLVLYIISLMLTTKLTHTSTMDAQEVETIWTILPAVILILIALPSLRILYMMDEINNPVLTVKTMGHQWYWSYEYTDYEDLNFDSYMIPTSDLKPGELRLLEVDNRVVLPMELPIRMLISSEDVLHSWAVPSLGLKTDAIPGRLNQATVTSNRPGLFYGQCSEICGSNHSFMPIVLEMVPLKYFENWSASMI.

Residues 1 to 14 are Mitochondrial intermembrane-facing; sequence MAYPFQLGLQDATS. The helical transmembrane segment at 15-45 threads the bilayer; it reads PIMEELTNFHDHTLMIVFLISTLVLYIISLM. Residues 46–59 lie on the Mitochondrial matrix side of the membrane; sequence LTTKLTHTSTMDAQ. The chain crosses the membrane as a helical span at residues 60–87; sequence EVETIWTILPAVILILIALPSLRILYMM. Topologically, residues 88-227 are mitochondrial intermembrane; the sequence is DEINNPVLTV…YFENWSASMI (140 aa). Cu cation is bound by residues His161, Cys196, Glu198, Cys200, His204, and Met207. Position 198 (Glu198) interacts with Mg(2+). Tyr218 is modified (phosphotyrosine).

Belongs to the cytochrome c oxidase subunit 2 family. Component of the cytochrome c oxidase (complex IV, CIV), a multisubunit enzyme composed of 14 subunits. The complex is composed of a catalytic core of 3 subunits MT-CO1, MT-CO2 and MT-CO3, encoded in the mitochondrial DNA, and 11 supernumerary subunits COX4I, COX5A, COX5B, COX6A, COX6B, COX6C, COX7A, COX7B, COX7C, COX8 and NDUFA4, which are encoded in the nuclear genome. The complex exists as a monomer or a dimer and forms supercomplexes (SCs) in the inner mitochondrial membrane with NADH-ubiquinone oxidoreductase (complex I, CI) and ubiquinol-cytochrome c oxidoreductase (cytochrome b-c1 complex, complex III, CIII), resulting in different assemblies (supercomplex SCI(1)III(2)IV(1) and megacomplex MCI(2)III(2)IV(2)). Found in a complex with TMEM177, COA6, COX18, COX20, SCO1 and SCO2. Interacts with TMEM177 in a COX20-dependent manner. Interacts with COX20. Interacts with COX16. Requires Cu cation as cofactor.

The protein resides in the mitochondrion inner membrane. The catalysed reaction is 4 Fe(II)-[cytochrome c] + O2 + 8 H(+)(in) = 4 Fe(III)-[cytochrome c] + 2 H2O + 4 H(+)(out). In terms of biological role, component of the cytochrome c oxidase, the last enzyme in the mitochondrial electron transport chain which drives oxidative phosphorylation. The respiratory chain contains 3 multisubunit complexes succinate dehydrogenase (complex II, CII), ubiquinol-cytochrome c oxidoreductase (cytochrome b-c1 complex, complex III, CIII) and cytochrome c oxidase (complex IV, CIV), that cooperate to transfer electrons derived from NADH and succinate to molecular oxygen, creating an electrochemical gradient over the inner membrane that drives transmembrane transport and the ATP synthase. Cytochrome c oxidase is the component of the respiratory chain that catalyzes the reduction of oxygen to water. Electrons originating from reduced cytochrome c in the intermembrane space (IMS) are transferred via the dinuclear copper A center (CU(A)) of subunit 2 and heme A of subunit 1 to the active site in subunit 1, a binuclear center (BNC) formed by heme A3 and copper B (CU(B)). The BNC reduces molecular oxygen to 2 water molecules using 4 electrons from cytochrome c in the IMS and 4 protons from the mitochondrial matrix. The chain is Cytochrome c oxidase subunit 2 (MT-CO2) from Leopoldamys sabanus (Long-tailed giant rat).